Here is a 528-residue protein sequence, read N- to C-terminus: Esterase PE16 (528 aa).

The PE domain occupies 1 to 93 (MSFVFAVPEM…AGWYVDAEAA (93 aa)). The segment at 94–143 (NAALVDTAATGASELGSGGRTALILGSTGTPRPPFDYMQQVYDRYIAPHY) is linker. The region spanning 149–369 (SGLYTPAQFQ…LRAIIELGYD (221 aa)) is the PE-PPE domain. Residue Ser199 is part of the active site. Residues 503–523 (IALLVFAAGIPAVAAVAILTG) traverse the membrane as a helical segment.

This sequence belongs to the mycobacterial PE family.

It localises to the membrane. It catalyses the reaction a hexanoate ester + H2O = an aliphatic alcohol + hexanoate + H(+). It carries out the reaction an octanoate ester + H2O = an aliphatic alcohol + octanoate + H(+). The enzyme catalyses a butanoate ester + H2O = an aliphatic alcohol + butanoate + H(+). Its activity is regulated as follows. Esterase activity is significantly inhibited by the serine modifier phenylmethylsulfonyl fluoride (PMSF). Esterase that hydrolyzes short to medium chain fatty acid esters with the highest specific activity for p-nitrophenyl caproate (pNPC6). Has lower activity with p-nitrophenyl caprylate (pNPC8) and p-nitrophenyl butyrate (pNPC4). Has weak activity with p-nitrophenyl caprate (pNPC10) and p-nitrophenyl laurate (pNPC12). Does not possess lipolytic activity and cutinase activity. This chain is Esterase PE16, found in Mycobacterium tuberculosis (strain ATCC 25618 / H37Rv).